A 424-amino-acid chain; its full sequence is MKILSLLVVGALCMGGKVYGEVNGDWNNNGDWNNNGDWNNNGDWNNNGPILDCSTLQCPPRYHCEVNNGNRQCVEDQITLPPFDKCDNVHCPKGFNCKYDWEKDLALCVPWRPYPPVCRTRCPEGHECKVDEWGKECCVKIKCDDICDLRCPKGHECKIKHDGSKCCVRSWRPRPHKPHPRPPICRLRCPPGHECKHDEHGKECCVKKRHHDRCDLKCKRGYECKIKHDGSKCCVKRTPKRPCCKPNSCARDEKCVATKDRIICVKPTCDNTRCPPNYHCICGDKIDGVKCVPDCKKARCDDVECPDFHRCVERRGGILSCEFDPPRQPRSLDWAENENDDRDYDDRDYDDDEYDGDYDGRDGDYDGDYDGDYDDDNYYGDDDYDNDWDNDNDWGNDWDNDWDNEDGDNWNDDDFQDANDEWDY.

The first 23 residues, 1–23 (MKILSLLVVGALCMGGKVYGEVN), serve as a signal peptide directing secretion. 6 Follistatin-like domains span residues 52 to 74 (DCSTLQCPPRYHCEVNNGNRQCV), 85 to 109 (KCDNVHCPKGFNCKYDWEKDLALCV), 117 to 139 (VCRTRCPEGHECKVDEWGKECCV), 184 to 206 (ICRLRCPPGHECKHDEHGKECCV), 215 to 234 (DLKCKRGYECKIKHDGSKCC), and 299 to 322 (RCDDVECPDFHRCVERRGGILSCE). Residues 330-424 (RSLDWAENEN…FQDANDEWDY (95 aa)) form a disordered region. Acidic residues-rich tracts occupy residues 335–357 (AENENDDRDYDDRDYDDDEYDGD) and 365–424 (YDGD…EWDY).

The sequence is that of Spore coat protein SP60 (cotC) from Dictyostelium discoideum (Social amoeba).